Reading from the N-terminus, the 129-residue chain is Ribosome-binding factor A (129 aa).

This sequence belongs to the RbfA family. As to quaternary structure, monomer. Binds 30S ribosomal subunits, but not 50S ribosomal subunits or 70S ribosomes.

The protein resides in the cytoplasm. Functionally, one of several proteins that assist in the late maturation steps of the functional core of the 30S ribosomal subunit. Associates with free 30S ribosomal subunits (but not with 30S subunits that are part of 70S ribosomes or polysomes). Required for efficient processing of 16S rRNA. May interact with the 5'-terminal helix region of 16S rRNA. This is Ribosome-binding factor A from Ectopseudomonas mendocina (strain ymp) (Pseudomonas mendocina).